The sequence spans 216 residues: DDB1- and CUL4-associated factor 16 (216 aa).

Residues 1-42 (MGPRNPSPDHLSESESEEEENISYLNESSGEEWDSSEEEDSM) form a disordered region. Residues 29–41 (SGEEWDSSEEEDS) are compositionally biased toward acidic residues. Position 61 is an N6-acetyllysine (lysine 61).

As to quaternary structure, interacts with DDB1 and CUL4A.

Its subcellular location is the nucleus. It participates in protein modification; protein ubiquitination. Functionally, functions as a substrate recognition component for CUL4-DDB1 E3 ubiquitin-protein ligase complex, which mediates ubiquitination and proteasome-dependent degradation of nuclear proteins. The sequence is that of DDB1- and CUL4-associated factor 16 from Homo sapiens (Human).